The chain runs to 82 residues: Cytochrome b559 subunit alpha (82 aa).

A helical membrane pass occupies residues Val-21–Trp-35. Residue His-23 coordinates heme.

This sequence belongs to the PsbE/PsbF family. As to quaternary structure, heterodimer of an alpha subunit and a beta subunit. PSII is composed of 1 copy each of membrane proteins PsbA, PsbB, PsbC, PsbD, PsbE, PsbF, PsbH, PsbI, PsbJ, PsbK, PsbL, PsbM, PsbT, PsbX, PsbY, PsbZ, Psb30/Ycf12, at least 3 peripheral proteins of the oxygen-evolving complex and a large number of cofactors. It forms dimeric complexes. The cofactor is heme b.

Its subcellular location is the plastid. It is found in the chloroplast thylakoid membrane. This b-type cytochrome is tightly associated with the reaction center of photosystem II (PSII). PSII is a light-driven water:plastoquinone oxidoreductase that uses light energy to abstract electrons from H(2)O, generating O(2) and a proton gradient subsequently used for ATP formation. It consists of a core antenna complex that captures photons, and an electron transfer chain that converts photonic excitation into a charge separation. The sequence is that of Cytochrome b559 subunit alpha from Stigeoclonium helveticum (Green alga).